A 490-amino-acid polypeptide reads, in one-letter code: GTPase Der (490 aa).

The EngA-type G 1 domain occupies 3 to 166 (PVIALVGRPN…IALSEFPKDD (164 aa)). Residues 9-16 (GRPNVGKS), 56-60 (DTGGI), and 118-121 (NKVD) each bind GTP. Residues 164–191 (KDDADEPEEGEEEIVAEGEEAKRIPGPS) are disordered. The span at 166–181 (DADEPEEGEEEIVAEG) shows a compositional bias: acidic residues. Residues 182 to 191 (EEAKRIPGPS) are compositionally biased toward basic and acidic residues. The 174-residue stretch at 196 to 369 (IKIAIIGRPN…SVQNSFKSAV (174 aa)) folds into the EngA-type G 2 domain. GTP is bound by residues 202–209 (GRPNVGKS), 249–253 (DTAGV), and 314–317 (NKWD). Positions 370–454 (TRWPTSRLTQ…PIRIEFKGGE (85 aa)) constitute a KH-like domain. A disordered region spans residues 452 to 490 (GGENPYEGNKNTLTDRQVNKKRRLMSHHKKADKKRRDKR). Positions 470–490 (NKKRRLMSHHKKADKKRRDKR) are enriched in basic residues.

This sequence belongs to the TRAFAC class TrmE-Era-EngA-EngB-Septin-like GTPase superfamily. EngA (Der) GTPase family. As to quaternary structure, associates with the 50S ribosomal subunit.

GTPase that plays an essential role in the late steps of ribosome biogenesis. This is GTPase Der from Pseudomonas fluorescens (strain ATCC BAA-477 / NRRL B-23932 / Pf-5).